The chain runs to 450 residues: UDP-N-acetylmuramoylalanine--D-glutamate ligase (450 aa).

An ATP-binding site is contributed by 119–125 (GSNGKTT).

The protein belongs to the MurCDEF family.

It localises to the cytoplasm. The catalysed reaction is UDP-N-acetyl-alpha-D-muramoyl-L-alanine + D-glutamate + ATP = UDP-N-acetyl-alpha-D-muramoyl-L-alanyl-D-glutamate + ADP + phosphate + H(+). It functions in the pathway cell wall biogenesis; peptidoglycan biosynthesis. Its function is as follows. Cell wall formation. Catalyzes the addition of glutamate to the nucleotide precursor UDP-N-acetylmuramoyl-L-alanine (UMA). This Streptococcus sanguinis (strain SK36) protein is UDP-N-acetylmuramoylalanine--D-glutamate ligase.